We begin with the raw amino-acid sequence, 2885 residues long: E3 ubiquitin-protein ligase hyd (2885 aa).

Positions 83 to 138 (SDAKCSTSGGSGTASASKAPSSSRPMARSRARLLRATGRSNSTGQGSGSRSTGVII) are disordered. Low complexity-rich tracts occupy residues 95-108 (TASA…SRPM) and 116-138 (LRAT…GVII). Positions 154 to 196 (YVPEELISQAEVVLQGKSRNLIIRELQRTNLDVNLAVNNLLSR) constitute a UBA domain. Residues 266–276 (ANANAADSNQS) show a composition bias toward low complexity. Disordered stretches follow at residues 266-291 (ANAN…TGNS), 580-664 (NNLN…GRKD), and 711-731 (AATS…KEDD). Polar residues-rich tracts occupy residues 277-291 (TTRS…TGNS) and 598-615 (AMPS…SNSK). Phosphoserine occurs at positions 628 and 631. Positions 650–664 (TTKEDSNAPQEGRKD) are enriched in basic and acidic residues. Low complexity predominate over residues 711-722 (AATSSTSNTAST). Position 967 is a phosphoserine (serine 967). A compositionally biased stretch (low complexity) spans 1008–1032 (ASSSNENSSFATMSSSAAGSASSTS). Positions 1008-1035 (ASSSNENSSFATMSSSAAGSASSTSRDN) are disordered. A UBR-type zinc finger spans residues 1217-1285 (DTCSFTWTGA…EKCKCKALIA (69 aa)). A Phosphoserine modification is found at serine 1362. The tract at residues 1642 to 1761 (NEDGMQDDES…IRSRDTARSS (120 aa)) is disordered. Over residues 1669–1681 (NQSNQEVQRSVQA) the composition is skewed to polar residues. Over residues 1696–1721 (LEDESGDSSAQEEDGSEDGESDDQSD) the composition is skewed to acidic residues. The span at 1735-1749 (TNSNARSDLAPQTMQ) shows a compositional bias: polar residues. Position 2037 is a phosphoserine (serine 2037). A disordered region spans residues 2124-2143 (IDSSKTGDGNVTNKAEGSTD). Serine 2183 carries the post-translational modification Phosphoserine. The disordered stretch occupies residues 2473 to 2492 (NLDARPYTPPNSSDNATPES). Over residues 2482–2492 (PNSSDNATPES) the composition is skewed to polar residues. Positions 2484–2561 (SSDNATPESL…AIEIITFKQK (78 aa)) constitute a PABC domain. Phosphoserine is present on serine 2574. The HECT domain maps to 2782–2885 (FNDESSEGPD…AIKSKNFGFV (104 aa)). The active-site Glycyl thioester intermediate is cysteine 2854.

The protein belongs to the UBR5 family.

Its subcellular location is the nucleus. It is found in the cytoplasm. The enzyme catalyses S-ubiquitinyl-[E2 ubiquitin-conjugating enzyme]-L-cysteine + [acceptor protein]-L-lysine = [E2 ubiquitin-conjugating enzyme]-L-cysteine + N(6)-ubiquitinyl-[acceptor protein]-L-lysine.. It participates in protein modification; protein ubiquitination. Its function is as follows. E3 ubiquitin-protein ligase which accepts ubiquitin from an E2 ubiquitin-conjugating enzyme in the form of a thioester and then directly transfers the ubiquitin to targeted substrate. Required for regulation of cell proliferation in imaginal disks and germ cells. Acts as a negative regulator of hh, ci and dpp expression in the anterior of the eye disk. Acts as a positive regulator of the canonical Wnt signaling pathway by mediating ubiquitination and degradation of gro. Catalyzes 'Lys-63'-linked polyubiquitination of akirin, thereby activating the immune deficiency pathway (Imd). This chain is E3 ubiquitin-protein ligase hyd (hyd), found in Drosophila melanogaster (Fruit fly).